The sequence spans 188 residues: Elongation factor P (188 aa).

Lys-34 bears the N6-(3,6-diaminohexanoyl)-5-hydroxylysine mark.

This sequence belongs to the elongation factor P family. May be beta-lysylated on the epsilon-amino group of Lys-34 by the combined action of EpmA and EpmB, and then hydroxylated on the C5 position of the same residue by EpmC (if this protein is present). Lysylation is critical for the stimulatory effect of EF-P on peptide-bond formation. The lysylation moiety may extend toward the peptidyltransferase center and stabilize the terminal 3-CCA end of the tRNA. Hydroxylation of the C5 position on Lys-34 may allow additional potential stabilizing hydrogen-bond interactions with the P-tRNA.

The protein localises to the cytoplasm. It participates in protein biosynthesis; polypeptide chain elongation. Functionally, involved in peptide bond synthesis. Alleviates ribosome stalling that occurs when 3 or more consecutive Pro residues or the sequence PPG is present in a protein, possibly by augmenting the peptidyl transferase activity of the ribosome. Modification of Lys-34 is required for alleviation. The chain is Elongation factor P from Xanthomonas axonopodis pv. citri (strain 306).